The sequence spans 416 residues: Glutamate dehydrogenase A2 (416 aa).

Lys-105 is a catalytic residue.

Belongs to the Glu/Leu/Phe/Val dehydrogenases family. In terms of assembly, homohexamer.

This is Glutamate dehydrogenase A2 (gdhA2) from Halobacterium salinarum (strain ATCC 700922 / JCM 11081 / NRC-1) (Halobacterium halobium).